The primary structure comprises 230 residues: Ribonuclease 3 (230 aa).

Residues 6-135 enclose the RNase III domain; it reads TTELKERYGI…FLGALYLDQK (130 aa). Glu48 contacts Mg(2+). The active site involves Asp52. The Mg(2+) site is built by Asp121 and Glu124. Glu124 is an active-site residue. A DRBM domain is found at 161–230; that stretch reads DHKTQLQEVL…AERALKSIPQ (70 aa).

Belongs to the ribonuclease III family. As to quaternary structure, homodimer. Mg(2+) serves as cofactor.

The protein localises to the cytoplasm. The catalysed reaction is Endonucleolytic cleavage to 5'-phosphomonoester.. In terms of biological role, digests double-stranded RNA. Involved in the processing of primary rRNA transcript to yield the immediate precursors to the large and small rRNAs (23S and 16S). Processes some mRNAs, and tRNAs when they are encoded in the rRNA operon. Processes pre-crRNA and tracrRNA of type II CRISPR loci if present in the organism. This is Ribonuclease 3 from Enterococcus faecalis (strain ATCC 700802 / V583).